The following is a 483-amino-acid chain: Probable pectate lyase 12 (483 aa).

The N-terminal stretch at 1–24 (MMLQRSCIVLFFSLFLLVPQMVFS) is a signal peptide. N-linked (GlcNAc...) asparagine glycosylation is found at N27 and N50. Ca(2+)-binding residues include D220, D244, and D248. Residue R300 is part of the active site.

Belongs to the polysaccharide lyase 1 family. It depends on Ca(2+) as a cofactor.

It carries out the reaction Eliminative cleavage of (1-&gt;4)-alpha-D-galacturonan to give oligosaccharides with 4-deoxy-alpha-D-galact-4-enuronosyl groups at their non-reducing ends.. It participates in glycan metabolism; pectin degradation; 2-dehydro-3-deoxy-D-gluconate from pectin: step 2/5. In Arabidopsis thaliana (Mouse-ear cress), this protein is Probable pectate lyase 12.